The following is a 130-amino-acid chain: Large ribosomal subunit protein bL17 (130 aa).

This sequence belongs to the bacterial ribosomal protein bL17 family. As to quaternary structure, part of the 50S ribosomal subunit. Contacts protein L32.

This chain is Large ribosomal subunit protein bL17, found in Photorhabdus laumondii subsp. laumondii (strain DSM 15139 / CIP 105565 / TT01) (Photorhabdus luminescens subsp. laumondii).